The following is a 456-amino-acid chain: Adenylosuccinate synthetase isozyme 2 (456 aa).

The disordered stretch occupies residues 1-24 (MAFAETNPAASSLPNGDCGRPRAR). Residues 39-45 (GDEGKGK) and 67-69 (GHT) each bind GTP. Catalysis depends on Asp40, which acts as the Proton acceptor. 2 residues coordinate Mg(2+): Asp40 and Gly67. Asp40 is a binding site for substrate. IMP is bound by residues 40-43 (DEGK), 65-68 (NAGH), Thr162, Arg176, Asn255, Thr270, and Arg334. His68 (proton donor) is an active-site residue. 330-336 (VTTGRKR) is a substrate binding site. Residues Arg336, 362-364 (KLD), and 444-447 (GVGK) contribute to the GTP site.

This sequence belongs to the adenylosuccinate synthetase family. In terms of assembly, homodimer. Mg(2+) is required as a cofactor. In terms of tissue distribution, widely expressed.

Its subcellular location is the cytoplasm. It is found in the mitochondrion. The catalysed reaction is IMP + L-aspartate + GTP = N(6)-(1,2-dicarboxyethyl)-AMP + GDP + phosphate + 2 H(+). It functions in the pathway purine metabolism; AMP biosynthesis via de novo pathway; AMP from IMP: step 1/2. Inhibited competitively by AMP and IMP and non-competitively by fructose 1,6-bisphosphate. Plays an important role in the de novo pathway and in the salvage pathway of purine nucleotide biosynthesis. Catalyzes the first committed step in the biosynthesis of AMP from IMP. In Sus scrofa (Pig), this protein is Adenylosuccinate synthetase isozyme 2.